A 356-amino-acid chain; its full sequence is 3-dehydroquinate synthase (356 aa).

Residues 101-105 (GVIGD), 125-126 (TT), Lys138, and Lys147 contribute to the NAD(+) site. 3 residues coordinate Zn(2+): Glu180, His243, and His260.

Belongs to the sugar phosphate cyclases superfamily. Dehydroquinate synthase family. The cofactor is Co(2+). Zn(2+) is required as a cofactor. NAD(+) serves as cofactor.

It localises to the cytoplasm. The enzyme catalyses 7-phospho-2-dehydro-3-deoxy-D-arabino-heptonate = 3-dehydroquinate + phosphate. It participates in metabolic intermediate biosynthesis; chorismate biosynthesis; chorismate from D-erythrose 4-phosphate and phosphoenolpyruvate: step 2/7. Its function is as follows. Catalyzes the conversion of 3-deoxy-D-arabino-heptulosonate 7-phosphate (DAHP) to dehydroquinate (DHQ). This is 3-dehydroquinate synthase from Alkaliphilus metalliredigens (strain QYMF).